Here is a 329-residue protein sequence, read N- to C-terminus: Phosphate acyltransferase (329 aa).

The protein belongs to the PlsX family. In terms of assembly, homodimer. Probably interacts with PlsY.

The protein localises to the cytoplasm. It catalyses the reaction a fatty acyl-[ACP] + phosphate = an acyl phosphate + holo-[ACP]. It functions in the pathway lipid metabolism; phospholipid metabolism. Its function is as follows. Catalyzes the reversible formation of acyl-phosphate (acyl-PO(4)) from acyl-[acyl-carrier-protein] (acyl-ACP). This enzyme utilizes acyl-ACP as fatty acyl donor, but not acyl-CoA. This is Phosphate acyltransferase from Campylobacter lari (strain RM2100 / D67 / ATCC BAA-1060).